We begin with the raw amino-acid sequence, 82 residues long: Large ribosomal subunit protein bL31B (82 aa).

Belongs to the bacterial ribosomal protein bL31 family. Type B subfamily. As to quaternary structure, part of the 50S ribosomal subunit.

This is Large ribosomal subunit protein bL31B from Amoebophilus asiaticus (strain 5a2).